Consider the following 342-residue polypeptide: UDP-3-O-acylglucosamine N-acyltransferase (342 aa).

The active-site Proton acceptor is His243.

It belongs to the transferase hexapeptide repeat family. LpxD subfamily. Homotrimer.

It catalyses the reaction a UDP-3-O-[(3R)-3-hydroxyacyl]-alpha-D-glucosamine + a (3R)-hydroxyacyl-[ACP] = a UDP-2-N,3-O-bis[(3R)-3-hydroxyacyl]-alpha-D-glucosamine + holo-[ACP] + H(+). It functions in the pathway bacterial outer membrane biogenesis; LPS lipid A biosynthesis. In terms of biological role, catalyzes the N-acylation of UDP-3-O-acylglucosamine using 3-hydroxyacyl-ACP as the acyl donor. Is involved in the biosynthesis of lipid A, a phosphorylated glycolipid that anchors the lipopolysaccharide to the outer membrane of the cell. In Coxiella burnetii (strain CbuK_Q154) (Coxiella burnetii (strain Q154)), this protein is UDP-3-O-acylglucosamine N-acyltransferase.